A 407-amino-acid chain; its full sequence is Arginine deiminase (407 aa).

Cys-397 functions as the Amidino-cysteine intermediate in the catalytic mechanism.

It belongs to the arginine deiminase family.

Its subcellular location is the cytoplasm. The enzyme catalyses L-arginine + H2O = L-citrulline + NH4(+). It participates in amino-acid degradation; L-arginine degradation via ADI pathway; carbamoyl phosphate from L-arginine: step 1/2. This chain is Arginine deiminase, found in Salmonella choleraesuis (strain SC-B67).